A 302-amino-acid polypeptide reads, in one-letter code: Recombination-associated protein RdgC (302 aa).

It belongs to the RdgC family.

It is found in the cytoplasm. The protein localises to the nucleoid. Functionally, may be involved in recombination. The protein is Recombination-associated protein RdgC of Xylella fastidiosa (strain M23).